The sequence spans 382 residues: MTEFWLISAPGEKTCQQTWEKLHAATTKNNNLAVSSKFNIPDLKVGTLDVLVGLSDELAKLDAFVEGVVKKVAQYMADVLEDSKDKVQENLLANGVDLVTYITRFQWDMAKYPIKQSLKNISEIIAKGVTQIDNDLKSRASAYNNLKGNLQNLERKNAGSLLTRSLAEIVKKDDFVLDSEYLVTLLVVVPKLNHNDWIKQYETLAEMVVPRSSNVLSEDQDSYLCNVTLFRKAVDDFRHKARENKFIVRDFQYNEEEMKADKEEMNRLSTDKKKQFGPLVRWLKVNFSEAFIAWIHVKALRVFVESVLRYGLPVNFQAMLLQPNKKTMKKLREVLYELYKHLDSSAAAIIDAPMDIPGLNLSQQEYYPYVYYKIDCNLLEFK.

The residue at position 2 (T2) is an N-acetylthreonine.

This sequence belongs to the V-ATPase C subunit family. As to quaternary structure, V-ATPase is a heteromultimeric enzyme made up of two complexes: the ATP-hydrolytic V1 complex and the proton translocation V0 complex. The V1 complex consists of three catalytic AB heterodimers that form a heterohexamer, three peripheral stalks each consisting of EG heterodimers, one central rotor including subunits D and F, and the regulatory subunits C and H. The proton translocation complex V0 consists of the proton transport subunit a, a ring of proteolipid subunits c9c'', rotary subunit d, subunits e and f, and the accessory subunits ATP6AP1/Ac45 and ATP6AP2/PRR. Expressed in brain (at protein level).

It localises to the cytoplasmic vesicle. The protein localises to the secretory vesicle. Its subcellular location is the synaptic vesicle membrane. It is found in the clathrin-coated vesicle membrane. Its function is as follows. Subunit of the V1 complex of vacuolar(H+)-ATPase (V-ATPase), a multisubunit enzyme composed of a peripheral complex (V1) that hydrolyzes ATP and a membrane integral complex (V0) that translocates protons. V-ATPase is responsible for acidifying and maintaining the pH of intracellular compartments and in some cell types, is targeted to the plasma membrane, where it is responsible for acidifying the extracellular environment. Subunit C is necessary for the assembly of the catalytic sector of the enzyme and is likely to have a specific function in its catalytic activity. The sequence is that of V-type proton ATPase subunit C 1 (ATP6V1C1) from Bos taurus (Bovine).